Here is a 147-residue protein sequence, read N- to C-terminus: Large ribosomal subunit protein bL9 (147 aa).

It belongs to the bacterial ribosomal protein bL9 family.

In terms of biological role, binds to the 23S rRNA. This chain is Large ribosomal subunit protein bL9, found in Caldanaerobacter subterraneus subsp. tengcongensis (strain DSM 15242 / JCM 11007 / NBRC 100824 / MB4) (Thermoanaerobacter tengcongensis).